The sequence spans 356 residues: Glutamine synthetase N-1 (356 aa).

A GS beta-grasp domain is found at V19–G99. The GS catalytic domain occupies K106–P356.

This sequence belongs to the glutamine synthetase family. In terms of assembly, homooctamer. As to expression, this is a nodule isozyme.

It localises to the cytoplasm. The enzyme catalyses L-glutamate + NH4(+) + ATP = L-glutamine + ADP + phosphate + H(+). The chain is Glutamine synthetase N-1 (Gln-gamma) from Phaseolus vulgaris (Kidney bean).